The primary structure comprises 588 residues: Aspartate--tRNA ligase (588 aa).

Residue glutamate 177 coordinates L-aspartate. Positions 201–204 (QLFK) are aspartate. Arginine 223 lines the L-aspartate pocket. ATP is bound by residues 223-225 (RDE) and glutamine 232. Histidine 451 lines the L-aspartate pocket. ATP is bound at residue glutamate 485. Position 492 (arginine 492) interacts with L-aspartate. 537 to 540 (GLDR) lines the ATP pocket.

It belongs to the class-II aminoacyl-tRNA synthetase family. Type 1 subfamily. In terms of assembly, homodimer.

It is found in the cytoplasm. The enzyme catalyses tRNA(Asp) + L-aspartate + ATP = L-aspartyl-tRNA(Asp) + AMP + diphosphate. Catalyzes the attachment of L-aspartate to tRNA(Asp) in a two-step reaction: L-aspartate is first activated by ATP to form Asp-AMP and then transferred to the acceptor end of tRNA(Asp). This chain is Aspartate--tRNA ligase, found in Staphylococcus epidermidis (strain ATCC 35984 / DSM 28319 / BCRC 17069 / CCUG 31568 / BM 3577 / RP62A).